The sequence spans 525 residues: MSKDIHDHRILILDFGSQYTQLIARRVREIGVYCELWSWDVTEEQIKGFNPTGIILAGGPESVTEANSPRAPEYVYTAGVPVLGICYGMQTMAEQLGGGVESSSHKEFGYAAVELIAQSALFNKVEDSIGDNGNALLDVWMSHGDKVSAIPEGFVTVAQTASCAYGAMANEEKQFYGVQFHPEVTHTKQGSRILENFVVDICKCEKLWTSASIIDDAIAKMKAQVGDDEVILGLSGGVDSSVVAMLLHRAIGDKLTCVFVDNGLLRLDEGQQVMDMFGDHFGLNIIKIEAEDRFLNRLAGESEPEAKRKIIGNVFIDVFEEESNKLDNAKWLAQGTIYPDVIESAASATGKAHVIKSHHNVGGLPDYMKLGLVEPLRELFKDEVRKIGLELGLPYDMLYRHPFPGPGLGVRILGEVKKEYADLLRRADAIFIEELHKHDLYTKVSQAFTVFLPVKSVGVMGDARKYDWVVSLRCVETIDFMTARWSHLPYDFLGLVSNRIINEIDGISRVVYDISGKPPATIEWE.

The 199-residue stretch at 9–207 (RILILDFGSQ…VVDICKCEKL (199 aa)) folds into the Glutamine amidotransferase type-1 domain. The Nucleophile role is filled by C86. Residues H181 and E183 contribute to the active site. Residues 208–400 (WTSASIIDDA…LGLPYDMLYR (193 aa)) enclose the GMPS ATP-PPase domain. 235-241 (SGGVDSS) serves as a coordination point for ATP.

Homodimer.

It catalyses the reaction XMP + L-glutamine + ATP + H2O = GMP + L-glutamate + AMP + diphosphate + 2 H(+). It functions in the pathway purine metabolism; GMP biosynthesis; GMP from XMP (L-Gln route): step 1/1. In terms of biological role, catalyzes the synthesis of GMP from XMP. This Colwellia psychrerythraea (strain 34H / ATCC BAA-681) (Vibrio psychroerythus) protein is GMP synthase [glutamine-hydrolyzing].